The chain runs to 327 residues: Serine/threonine-protein phosphatase PP1-1 (327 aa).

Residues D63, H65, D91, and N123 each contribute to the Mn(2+) site. The active-site Proton donor is H124. Mn(2+) contacts are provided by H172 and H247. Residues G305–K327 are disordered. Residue T316 is modified to Phosphothreonine; by CDC2. Residues P317–K327 are compositionally biased toward basic residues.

The protein belongs to the PPP phosphatase family. PP-1 subfamily. In terms of assembly, oligomer. Requires Mn(2+) as cofactor.

The protein resides in the nucleus. The catalysed reaction is O-phospho-L-seryl-[protein] + H2O = L-seryl-[protein] + phosphate. It catalyses the reaction O-phospho-L-threonyl-[protein] + H2O = L-threonyl-[protein] + phosphate. Functionally, essential role in cell cycle control. PP1 is perhaps required for exit from mitosis. This Schizosaccharomyces pombe (strain 972 / ATCC 24843) (Fission yeast) protein is Serine/threonine-protein phosphatase PP1-1 (dis2).